Consider the following 222-residue polypeptide: Polyadenylate-binding protein 2 (222 aa).

Residues M1 to E43 are disordered. Residues V10–I24 show a composition bias toward basic and acidic residues. The 78-residue stretch at R101–T178 folds into the RRM domain.

It localises to the nucleus. Involved in the 3'-end formation of mRNA precursors (pre-mRNA) by the addition of a poly(A) tail of 200-250 nt to the upstream cleavage product. The polypeptide is Polyadenylate-binding protein 2 (pabpn1) (Dictyostelium discoideum (Social amoeba)).